The following is a 415-amino-acid chain: Thyroxine-binding globulin (415 aa).

An N-terminal signal peptide occupies residues 1-20 (MSPFLYLVLLVLGLHATIHC). Asn36 carries N-linked (GlcNAc...) (complex) asparagine glycosylation. N-linked (GlcNAc...) asparagine glycosylation occurs at Asn99. N-linked (GlcNAc...) asparagine; in variant Gary glycosylation is present at Ile116. Residues Asn165 and Asn253 are each glycosylated (N-linked (GlcNAc...) asparagine). Thyroxine is bound by residues Asn293 and Arg398.

Belongs to the serpin family. Expressed by the liver and secreted in plasma.

It localises to the secreted. Functionally, major thyroid hormone transport protein in serum. The sequence is that of Thyroxine-binding globulin (SERPINA7) from Homo sapiens (Human).